Here is a 415-residue protein sequence, read N- to C-terminus: Queuine tRNA-ribosyltransferase accessory subunit 2 (415 aa).

4 residues coordinate Zn(2+): Cys351, Cys353, Cys356, and His382.

The protein belongs to the queuine tRNA-ribosyltransferase family. QTRT2 subfamily. In terms of assembly, heterodimer of a catalytic subunit QTRT1 and an accessory subunit QTRT2. It depends on Zn(2+) as a cofactor.

It localises to the cytoplasm. The protein localises to the mitochondrion outer membrane. Non-catalytic subunit of the queuine tRNA-ribosyltransferase (TGT) that catalyzes the base-exchange of a guanine (G) residue with queuine (Q) at position 34 (anticodon wobble position) in tRNAs with GU(N) anticodons (tRNA-Asp, -Asn, -His and -Tyr), resulting in the hypermodified nucleoside queuosine (7-(((4,5-cis-dihydroxy-2-cyclopenten-1-yl)amino)methyl)-7-deazaguanosine). The polypeptide is Queuine tRNA-ribosyltransferase accessory subunit 2 (Homo sapiens (Human)).